We begin with the raw amino-acid sequence, 420 residues long: Proteasome-activating nucleotidase (420 aa).

A disordered region spans residues 1–25 (MRSHLVKPGSVYDGIEPGELGETTE). Positions 22–79 (ETTESVQDRVRQLESRNSFLEEQCSQIESEKRYLENQKIKYEREIRKLQSELDRMKTS) form a coiled coil. ATP-binding positions include 203–208 (GTGKTL) and His342. Residues 418-420 (MFV) form a docks into pockets in the proteasome alpha-ring to cause gate opening region.

This sequence belongs to the AAA ATPase family. In terms of assembly, homohexamer. The hexameric complex has a two-ring architecture resembling a top hat that caps the 20S proteasome core at one or both ends. Upon ATP-binding, the C-terminus of PAN interacts with the alpha-rings of the proteasome core by binding to the intersubunit pockets.

The protein localises to the cytoplasm. Its function is as follows. ATPase which is responsible for recognizing, binding, unfolding and translocation of substrate proteins into the archaeal 20S proteasome core particle. Is essential for opening the gate of the 20S proteasome via an interaction with its C-terminus, thereby allowing substrate entry and access to the site of proteolysis. Thus, the C-termini of the proteasomal ATPase function like a 'key in a lock' to induce gate opening and therefore regulate proteolysis. Unfolding activity requires energy from ATP hydrolysis, whereas ATP binding alone promotes ATPase-20S proteasome association which triggers gate opening, and supports translocation of unfolded substrates. This is Proteasome-activating nucleotidase from Methanosarcina mazei (strain ATCC BAA-159 / DSM 3647 / Goe1 / Go1 / JCM 11833 / OCM 88) (Methanosarcina frisia).